The following is a 244-amino-acid chain: Probable transcriptional regulatory protein CBU_1566 (244 aa).

It belongs to the TACO1 family.

The protein localises to the cytoplasm. The sequence is that of Probable transcriptional regulatory protein CBU_1566 from Coxiella burnetii (strain RSA 493 / Nine Mile phase I).